The sequence spans 137 residues: Large ribosomal subunit protein uL16 (137 aa).

This sequence belongs to the universal ribosomal protein uL16 family. As to quaternary structure, part of the 50S ribosomal subunit.

Binds 23S rRNA and is also seen to make contacts with the A and possibly P site tRNAs. This is Large ribosomal subunit protein uL16 from Roseobacter denitrificans (strain ATCC 33942 / OCh 114) (Erythrobacter sp. (strain OCh 114)).